The following is an 874-amino-acid chain: Alanine--tRNA ligase (874 aa).

Zn(2+)-binding residues include His-564, His-568, Cys-665, and His-669.

This sequence belongs to the class-II aminoacyl-tRNA synthetase family. Requires Zn(2+) as cofactor.

It localises to the cytoplasm. It catalyses the reaction tRNA(Ala) + L-alanine + ATP = L-alanyl-tRNA(Ala) + AMP + diphosphate. Catalyzes the attachment of alanine to tRNA(Ala) in a two-step reaction: alanine is first activated by ATP to form Ala-AMP and then transferred to the acceptor end of tRNA(Ala). Also edits incorrectly charged Ser-tRNA(Ala) and Gly-tRNA(Ala) via its editing domain. In Burkholderia pseudomallei (strain 668), this protein is Alanine--tRNA ligase.